Here is a 173-residue protein sequence, read N- to C-terminus: NADH-ubiquinone oxidoreductase chain 6 (173 aa).

Helical transmembrane passes span 1–21 (MTYIVSLFLLGLVLGLVAVAS), 27–47 (FAALGLVVAAGVGCGVLVGYG), 53–73 (LVLFLIYLGGMLVVFAYSAAL), 86–106 (SVLGYVVVYTVGVMLVAGWFW), and 139–159 (YGGGMLIVCAWVLLLTLFVVL).

Belongs to the complex I subunit 6 family.

Its subcellular location is the mitochondrion membrane. It carries out the reaction a ubiquinone + NADH + 5 H(+)(in) = a ubiquinol + NAD(+) + 4 H(+)(out). Its function is as follows. Core subunit of the mitochondrial membrane respiratory chain NADH dehydrogenase (Complex I) that is believed to belong to the minimal assembly required for catalysis. Complex I functions in the transfer of electrons from NADH to the respiratory chain. The immediate electron acceptor for the enzyme is believed to be ubiquinone. This chain is NADH-ubiquinone oxidoreductase chain 6 (MT-ND6), found in Salmo salar (Atlantic salmon).